A 122-amino-acid polypeptide reads, in one-letter code: Large ribosomal subunit protein uL14 (122 aa).

Belongs to the universal ribosomal protein uL14 family. In terms of assembly, part of the 50S ribosomal subunit. Forms a cluster with proteins L3 and L19. In the 70S ribosome, L14 and L19 interact and together make contacts with the 16S rRNA in bridges B5 and B8.

In terms of biological role, binds to 23S rRNA. Forms part of two intersubunit bridges in the 70S ribosome. The protein is Large ribosomal subunit protein uL14 of Synechococcus sp. (strain JA-2-3B'a(2-13)) (Cyanobacteria bacterium Yellowstone B-Prime).